Consider the following 227-residue polypeptide: ATP synthase F(0) complex subunit a (227 aa).

Helical transmembrane passes span 13–33 (YLLG…LFPA), 69–89 (WALL…LGLL), 98–118 (QLSL…IIGM), 132–152 (EGTP…SLFI), 179–199 (VFVL…VLFL), and 202–222 (LLEV…LSLY).

Belongs to the ATPase A chain family. In terms of assembly, component of the ATP synthase complex composed at least of ATP5F1A/subunit alpha, ATP5F1B/subunit beta, ATP5MC1/subunit c (homooctomer), MT-ATP6/subunit a, MT-ATP8/subunit 8, ATP5ME/subunit e, ATP5MF/subunit f, ATP5MG/subunit g, ATP5MK/subunit k, ATP5MJ/subunit j, ATP5F1C/subunit gamma, ATP5F1D/subunit delta, ATP5F1E/subunit epsilon, ATP5PF/subunit F6, ATP5PB/subunit b, ATP5PD/subunit d, ATP5PO/subunit OSCP. ATP synthase complex consists of a soluble F(1) head domain (subunits alpha(3) and beta(3)) - the catalytic core - and a membrane F(0) domain - the membrane proton channel (subunits c, a, 8, e, f, g, k and j). These two domains are linked by a central stalk (subunits gamma, delta, and epsilon) rotating inside the F1 region and a stationary peripheral stalk (subunits F6, b, d, and OSCP). Interacts with DNAJC30; interaction is direct.

Its subcellular location is the mitochondrion inner membrane. It carries out the reaction H(+)(in) = H(+)(out). Functionally, subunit a, of the mitochondrial membrane ATP synthase complex (F(1)F(0) ATP synthase or Complex V) that produces ATP from ADP in the presence of a proton gradient across the membrane which is generated by electron transport complexes of the respiratory chain. ATP synthase complex consist of a soluble F(1) head domain - the catalytic core - and a membrane F(1) domain - the membrane proton channel. These two domains are linked by a central stalk rotating inside the F(1) region and a stationary peripheral stalk. During catalysis, ATP synthesis in the catalytic domain of F(1) is coupled via a rotary mechanism of the central stalk subunits to proton translocation. With the subunit c (ATP5MC1), forms the proton-conducting channel in the F(0) domain, that contains two crucial half-channels (inlet and outlet) that facilitate proton movement from the mitochondrial intermembrane space (IMS) into the matrix. Protons are taken up via the inlet half-channel and released through the outlet half-channel, following a Grotthuss mechanism. This Danio rerio (Zebrafish) protein is ATP synthase F(0) complex subunit a.